Here is a 122-residue protein sequence, read N- to C-terminus: Large ribosomal subunit protein uL14 (122 aa).

It belongs to the universal ribosomal protein uL14 family. In terms of assembly, part of the 50S ribosomal subunit. Forms a cluster with proteins L3 and L19. In the 70S ribosome, L14 and L19 interact and together make contacts with the 16S rRNA in bridges B5 and B8.

Functionally, binds to 23S rRNA. Forms part of two intersubunit bridges in the 70S ribosome. The sequence is that of Large ribosomal subunit protein uL14 from Rhizobium meliloti (strain 1021) (Ensifer meliloti).